The chain runs to 949 residues: Glutamate receptor ionotropic, kainate 1 (949 aa).

The N-terminal stretch at M1–P30 is a signal peptide. The Extracellular portion of the chain corresponds to Q31–P576. 7 N-linked (GlcNAc...) asparagine glycosylation sites follow: N68, N74, N276, N379, N428, N439, and N446. L-glutamate is bound by residues P531, T533, and R538. Residue N561 is glycosylated (N-linked (GlcNAc...) asparagine). A helical transmembrane segment spans residues D577–A597. The Cytoplasmic portion of the chain corresponds to R598–G653. Residues I654–L674 form a helical membrane-spanning segment. Residues T675–N834 lie on the Extracellular side of the membrane. Positions 704 and 705 each coordinate L-glutamate. The residue at position 725 (S725) is a Phosphoserine; by PKC. E753 lines the L-glutamate pocket. T761 carries the post-translational modification Phosphothreonine; by PKC. A disulfide bridge connects residues C765 and C819. N-linked (GlcNAc...) asparagine glycosylation occurs at N766. The chain crosses the membrane as a helical span at residues I835 to G855. The Cytoplasmic portion of the chain corresponds to E856 to A949.

Belongs to the glutamate-gated ion channel (TC 1.A.10.1) family. GRIK1 subfamily. As to quaternary structure, homotetramer or heterotetramer of pore-forming glutamate receptor subunits. Tetramers may be formed by the dimerization of dimers. Can form functional heteromeric receptors with GRIK4 and GRIK5. Interacts with KLHL17. In terms of tissue distribution, expressed in the olfactory bulb (at protein level). Expressed in subsets of neurons throughout the developing and adult central and peripheral nervous systems. In the CNS principally in the medial amygdaloid nuclei, medial habenulae, pyriform and cingulate cortices, and Purkinje cell layer. Also highly expressed in embryonic and adult dorsal root ganglia. Expressed at high levels in the trigeminal ganglion neurons.

The protein resides in the cell membrane. It localises to the postsynaptic cell membrane. It catalyses the reaction Ca(2+)(in) = Ca(2+)(out). In terms of biological role, ionotropic glutamate receptor that functions as a cation-permeable ligand-gated ion channel, gated by L-glutamate and the glutamatergic agonist kainic acid. L-glutamate acts as an excitatory neurotransmitter at many synapses in the central nervous system. Binding of the excitatory neurotransmitter L-glutamate induces a conformation change, leading to the opening of the cation channel, and thereby converts the chemical signal to an electrical impulse. The receptor then desensitizes rapidly and enters a transient inactive state, characterized by the presence of bound agonist. This Rattus norvegicus (Rat) protein is Glutamate receptor ionotropic, kainate 1 (Grik1).